Here is an 852-residue protein sequence, read N- to C-terminus: Chitin synthase 1 (852 aa).

Disordered stretches follow at residues 27–46 (EDQDDMLPSTSAAAGETNYA) and 53–97 (SSLR…QANG). Polar residues predominate over residues 53–74 (SSLRSQKSANKPTTAQNRNSAA). 7 consecutive transmembrane segments (helical) span residues 492-509 (RWLNGSFFAGVYGLIHFR), 532-552 (VISLVFSWFSVGNFYIAFYFI), 572-592 (IFDFCKYAYAFLLFVIFICSM), 601-621 (FLFMACLVGFAIIMCYMLFCS), 686-706 (FLPYLLLLPGYINILNIYAFC), 787-807 (THLVLAWIACNALLVVFITTS), and 830-850 (CGLGIFRFLGSIMFLLLGIFT).

This sequence belongs to the chitin synthase family. Class II subfamily.

The protein localises to the cell membrane. The enzyme catalyses [(1-&gt;4)-N-acetyl-beta-D-glucosaminyl](n) + UDP-N-acetyl-alpha-D-glucosamine = [(1-&gt;4)-N-acetyl-beta-D-glucosaminyl](n+1) + UDP + H(+). Its function is as follows. Polymerizes chitin, a structural polymer of the cell wall and septum, by transferring the sugar moiety of UDP-GlcNAc to the non-reducing end of the growing chitin polymer. This chain is Chitin synthase 1 (CHS1), found in Mucor circinelloides f. lusitanicus (Mucor racemosus var. lusitanicus).